Reading from the N-terminus, the 560-residue chain is Trafficking protein particle complex II-specific subunit 65 (560 aa).

Residues 164–193 (SSKNTNNHLEKNNRATHRVSSKNSEVHEAD) are disordered. Phosphoserine occurs at positions 393 and 398.

As to quaternary structure, part of the multisubunit TRAPP (transport protein particle) II complex composed of BET3, BET5, TRS20, TRS23, TRS31, TRS33, TRS65, TRS120 and TRS130. Interacts directly with TRS120 and TRS130.

The protein localises to the cytoplasm. It is found in the golgi apparatus. The protein resides in the cis-Golgi network. It functions in the pathway glycan metabolism; beta-glucan biosynthesis. Its function is as follows. Specific subunit of the TRAPP II complex, a highly conserved vesicle tethering complex that functions in the late Golgi as a guanine nucleotide exchanger (GEF) for the Golgi YPT1 GTPase. TRS65 plays a role in the YPT GEF activity of TRAPP II in concert with the two other TRAPP II-specific subunits TRS120 and TRS130. Involved in cell wall (1--&gt;6)-beta-glucan synthesis. In Saccharomyces cerevisiae (strain ATCC 204508 / S288c) (Baker's yeast), this protein is Trafficking protein particle complex II-specific subunit 65 (TRS65).